The following is a 199-amino-acid chain: Imidazole glycerol phosphate synthase subunit HisH (199 aa).

One can recognise a Glutamine amidotransferase type-1 domain in the interval 1–199 (MTVVVDYEMG…QILKNLREML (199 aa)). The Nucleophile role is filled by Cys-79. Residues His-180 and Glu-182 contribute to the active site.

As to quaternary structure, heterodimer of HisH and HisF.

The protein localises to the cytoplasm. It catalyses the reaction 5-[(5-phospho-1-deoxy-D-ribulos-1-ylimino)methylamino]-1-(5-phospho-beta-D-ribosyl)imidazole-4-carboxamide + L-glutamine = D-erythro-1-(imidazol-4-yl)glycerol 3-phosphate + 5-amino-1-(5-phospho-beta-D-ribosyl)imidazole-4-carboxamide + L-glutamate + H(+). The enzyme catalyses L-glutamine + H2O = L-glutamate + NH4(+). It participates in amino-acid biosynthesis; L-histidine biosynthesis; L-histidine from 5-phospho-alpha-D-ribose 1-diphosphate: step 5/9. Functionally, IGPS catalyzes the conversion of PRFAR and glutamine to IGP, AICAR and glutamate. The HisH subunit catalyzes the hydrolysis of glutamine to glutamate and ammonia as part of the synthesis of IGP and AICAR. The resulting ammonia molecule is channeled to the active site of HisF. The polypeptide is Imidazole glycerol phosphate synthase subunit HisH (Carboxydothermus hydrogenoformans (strain ATCC BAA-161 / DSM 6008 / Z-2901)).